A 368-amino-acid polypeptide reads, in one-letter code: D-alanine--D-alanine ligase (368 aa).

The ATP-grasp domain occupies 151-358; the sequence is KKLLAAEGLP…YGTLVSTLVD (208 aa). 179 to 234 lines the ATP pocket; that stretch reads KSRLHLPVFVKPARGGSSIGITRVAEWAALDDAIAHARLHDPKVIVESGIIGREVE. 3 residues coordinate Mg(2+): D313, E325, and N327.

Belongs to the D-alanine--D-alanine ligase family. Mg(2+) serves as cofactor. It depends on Mn(2+) as a cofactor.

The protein localises to the cytoplasm. It catalyses the reaction 2 D-alanine + ATP = D-alanyl-D-alanine + ADP + phosphate + H(+). It participates in cell wall biogenesis; peptidoglycan biosynthesis. Its function is as follows. Cell wall formation. The chain is D-alanine--D-alanine ligase from Rhodococcus jostii (strain RHA1).